Here is a 389-residue protein sequence, read N- to C-terminus: Probable dual-specificity RNA methyltransferase RlmN (389 aa).

The segment at 1–23 is disordered; that stretch reads MTTQHPDTPETGITPGGTSGAFR. The active-site Proton acceptor is the Glu127. One can recognise a Radical SAM core domain in the interval 133-376; that stretch reads YPTRTTLCIS…ATLRDTRGQD (244 aa). Cys140 and Cys381 are joined by a disulfide. The [4Fe-4S] cluster site is built by Cys147, Cys151, and Cys154. S-adenosyl-L-methionine-binding positions include 202 to 203, Ser236, 259 to 261, and Asn338; these read GE and SLH. Catalysis depends on Cys381, which acts as the S-methylcysteine intermediate.

Belongs to the radical SAM superfamily. RlmN family. It depends on [4Fe-4S] cluster as a cofactor.

It localises to the cytoplasm. It carries out the reaction adenosine(2503) in 23S rRNA + 2 reduced [2Fe-2S]-[ferredoxin] + 2 S-adenosyl-L-methionine = 2-methyladenosine(2503) in 23S rRNA + 5'-deoxyadenosine + L-methionine + 2 oxidized [2Fe-2S]-[ferredoxin] + S-adenosyl-L-homocysteine. It catalyses the reaction adenosine(37) in tRNA + 2 reduced [2Fe-2S]-[ferredoxin] + 2 S-adenosyl-L-methionine = 2-methyladenosine(37) in tRNA + 5'-deoxyadenosine + L-methionine + 2 oxidized [2Fe-2S]-[ferredoxin] + S-adenosyl-L-homocysteine. Its function is as follows. Specifically methylates position 2 of adenine 2503 in 23S rRNA and position 2 of adenine 37 in tRNAs. The sequence is that of Probable dual-specificity RNA methyltransferase RlmN from Bifidobacterium longum (strain NCC 2705).